We begin with the raw amino-acid sequence, 205 residues long: Large ribosomal subunit protein uL3 (205 aa).

Residues 126-150 form a disordered region; the sequence is GGPKTHGQSDRHRAPGSISSTTTPG.

This sequence belongs to the universal ribosomal protein uL3 family. Part of the 50S ribosomal subunit. Forms a cluster with proteins L14 and L19.

In terms of biological role, one of the primary rRNA binding proteins, it binds directly near the 3'-end of the 23S rRNA, where it nucleates assembly of the 50S subunit. In Dehalococcoides mccartyi (strain ATCC BAA-2266 / KCTC 15142 / 195) (Dehalococcoides ethenogenes (strain 195)), this protein is Large ribosomal subunit protein uL3.